The sequence spans 816 residues: Phosphatidylinositol 4-kinase beta (816 aa).

3 disordered regions span residues 1-30 (MGDT…GSLL), 101-120 (EDEM…RRRR), and 248-318 (AHRK…SFSS). Position 2 is an N-acetylglycine (glycine 2). The segment at 2–68 (GDTVVEPAPL…VKLLHGGMAV (67 aa)) is interaction with ACBD3. Residues 52-242 (CQDVLEKVKL…GTKLRKLILS (191 aa)) form the PIK helical domain. Phosphoserine is present on serine 258. Threonine 263 carries the phosphothreonine modification. A phosphoserine mark is found at serine 266, serine 275, serine 277, serine 284, and serine 294. Composition is skewed to polar residues over residues 278–297 (DATA…SNPK) and 306–318 (SSST…SFSS). The residue at position 428 (serine 428) is a Phosphoserine. The residue at position 438 (threonine 438) is a Phosphothreonine. Residue serine 511 is modified to Phosphoserine. Residues threonine 517 and threonine 519 each carry the phosphothreonine modification. The 267-residue stretch at 535–801 (EPWQEKVRRI…MVDGSMRSIT (267 aa)) folds into the PI3K/PI4K catalytic domain. The G-loop stretch occupies residues 541–547 (VRRIREG). The tract at residues 668 to 676 (QVKDRHNGN) is catalytic loop. The activation loop stretch occupies residues 687–711 (HIDFGFILSSSPRNLGFETSAFKLT).

Belongs to the PI3/PI4-kinase family. Type III PI4K subfamily. Interacts with ARF1 and ARF3 in the Golgi complex, but not with ARF4, ARF5 or ARF6. Interacts with NCS1/FREQ in a calcium-independent manner. Interacts with CALN1/CABP8 and CALN2/CABP7; in a calcium-dependent manner; this interaction competes with NCS1/FREQ binding. Interacts with ACBD3. Interacts with ARMH3, YWHAB, YWHAE, YWHAG, YWHAH, YWHAQ, YWHAZ and SFN. Interacts with GGA2 (via VHS domain); the interaction is important for PI4KB location at the Golgi apparatus membrane. Interacts with ATG9A. Mg(2+) serves as cofactor. The cofactor is Mn(2+).

The protein localises to the endomembrane system. The protein resides in the mitochondrion outer membrane. Its subcellular location is the rough endoplasmic reticulum membrane. It is found in the golgi apparatus. It localises to the golgi apparatus membrane. The enzyme catalyses a 1,2-diacyl-sn-glycero-3-phospho-(1D-myo-inositol) + ATP = a 1,2-diacyl-sn-glycero-3-phospho-(1D-myo-inositol 4-phosphate) + ADP + H(+). Inhibited by wortmannin. Increased kinase activity upon interaction with NCS1/FREQ. Phosphorylates phosphatidylinositol (PI) in the first committed step in the production of the second messenger inositol-1,4,5,-trisphosphate (PIP). May regulate Golgi disintegration/reorganization during mitosis, possibly via its phosphorylation. Involved in Golgi-to-plasma membrane trafficking. The sequence is that of Phosphatidylinositol 4-kinase beta (PI4KB) from Plecturocebus moloch (Dusky titi monkey).